The following is a 430-amino-acid chain: Serine--tRNA ligase (430 aa).

T237–E239 contacts L-serine. R268 to E270 provides a ligand contact to ATP. E291 contacts L-serine. E355–S358 contacts ATP. S391 provides a ligand contact to L-serine.

It belongs to the class-II aminoacyl-tRNA synthetase family. Type-1 seryl-tRNA synthetase subfamily. In terms of assembly, homodimer. The tRNA molecule binds across the dimer.

The protein localises to the cytoplasm. The catalysed reaction is tRNA(Ser) + L-serine + ATP = L-seryl-tRNA(Ser) + AMP + diphosphate + H(+). It carries out the reaction tRNA(Sec) + L-serine + ATP = L-seryl-tRNA(Sec) + AMP + diphosphate + H(+). The protein operates within aminoacyl-tRNA biosynthesis; selenocysteinyl-tRNA(Sec) biosynthesis; L-seryl-tRNA(Sec) from L-serine and tRNA(Sec): step 1/1. Catalyzes the attachment of serine to tRNA(Ser). Is also able to aminoacylate tRNA(Sec) with serine, to form the misacylated tRNA L-seryl-tRNA(Sec), which will be further converted into selenocysteinyl-tRNA(Sec). This Salmonella schwarzengrund (strain CVM19633) protein is Serine--tRNA ligase.